The chain runs to 179 residues: Large ribosomal subunit protein uL5 (179 aa).

The protein belongs to the universal ribosomal protein uL5 family. As to quaternary structure, part of the 50S ribosomal subunit; part of the 5S rRNA/L5/L18/L25 subcomplex. Contacts the 5S rRNA and the P site tRNA. Forms a bridge to the 30S subunit in the 70S ribosome.

In terms of biological role, this is one of the proteins that bind and probably mediate the attachment of the 5S RNA into the large ribosomal subunit, where it forms part of the central protuberance. In the 70S ribosome it contacts protein S13 of the 30S subunit (bridge B1b), connecting the 2 subunits; this bridge is implicated in subunit movement. Contacts the P site tRNA; the 5S rRNA and some of its associated proteins might help stabilize positioning of ribosome-bound tRNAs. This is Large ribosomal subunit protein uL5 from Methylococcus capsulatus (strain ATCC 33009 / NCIMB 11132 / Bath).